A 373-amino-acid chain; its full sequence is tRNA-specific 2-thiouridylase MnmA (373 aa).

Residues 12–19 (GMSGGVDS) and M38 contribute to the ATP site. Residues 98 to 100 (NPD) form an interaction with target base in tRNA region. C103 functions as the Nucleophile in the catalytic mechanism. A disulfide bridge links C103 with C200. G127 is an ATP binding site. Residues 150–152 (KDQ) form an interaction with tRNA region. C200 serves as the catalytic Cysteine persulfide intermediate. Residues 312–313 (RY) form an interaction with tRNA region.

Belongs to the MnmA/TRMU family.

The protein localises to the cytoplasm. The enzyme catalyses S-sulfanyl-L-cysteinyl-[protein] + uridine(34) in tRNA + AH2 + ATP = 2-thiouridine(34) in tRNA + L-cysteinyl-[protein] + A + AMP + diphosphate + H(+). Functionally, catalyzes the 2-thiolation of uridine at the wobble position (U34) of tRNA, leading to the formation of s(2)U34. The polypeptide is tRNA-specific 2-thiouridylase MnmA (Streptococcus agalactiae serotype III (strain NEM316)).